We begin with the raw amino-acid sequence, 901 residues long: Probable inorganic carbon transporter subunit DabA (901 aa).

Zn(2+) contacts are provided by cysteine 424, aspartate 426, histidine 606, and cysteine 621.

The protein belongs to the inorganic carbon transporter (TC 9.A.2) DabA family. Forms a complex with DabB. Zn(2+) is required as a cofactor.

Its subcellular location is the cell membrane. Part of an energy-coupled inorganic carbon pump. This Staphylococcus aureus (strain MSSA476) protein is Probable inorganic carbon transporter subunit DabA.